Here is a 427-residue protein sequence, read N- to C-terminus: Serine--tRNA ligase (427 aa).

236–238 (TAE) is an L-serine binding site. An ATP-binding site is contributed by 267 to 269 (RRE). Glu-290 is an L-serine binding site. 354–357 (EISS) contacts ATP. Ser-390 contacts L-serine.

The protein belongs to the class-II aminoacyl-tRNA synthetase family. Type-1 seryl-tRNA synthetase subfamily. In terms of assembly, homodimer. The tRNA molecule binds across the dimer.

Its subcellular location is the cytoplasm. It carries out the reaction tRNA(Ser) + L-serine + ATP = L-seryl-tRNA(Ser) + AMP + diphosphate + H(+). The enzyme catalyses tRNA(Sec) + L-serine + ATP = L-seryl-tRNA(Sec) + AMP + diphosphate + H(+). The protein operates within aminoacyl-tRNA biosynthesis; selenocysteinyl-tRNA(Sec) biosynthesis; L-seryl-tRNA(Sec) from L-serine and tRNA(Sec): step 1/1. Catalyzes the attachment of serine to tRNA(Ser). Is also able to aminoacylate tRNA(Sec) with serine, to form the misacylated tRNA L-seryl-tRNA(Sec), which will be further converted into selenocysteinyl-tRNA(Sec). The protein is Serine--tRNA ligase of Picosynechococcus sp. (strain ATCC 27264 / PCC 7002 / PR-6) (Agmenellum quadruplicatum).